Reading from the N-terminus, the 217-residue chain is Uracil-DNA glycosylase (217 aa).

D62 acts as the Proton acceptor in catalysis.

This sequence belongs to the uracil-DNA glycosylase (UDG) superfamily. UNG family.

It localises to the cytoplasm. It carries out the reaction Hydrolyzes single-stranded DNA or mismatched double-stranded DNA and polynucleotides, releasing free uracil.. In terms of biological role, excises uracil residues from the DNA which can arise as a result of misincorporation of dUMP residues by DNA polymerase or due to deamination of cytosine. The sequence is that of Uracil-DNA glycosylase from Streptococcus equi subsp. equi (strain 4047).